A 166-amino-acid polypeptide reads, in one-letter code: SsrA-binding protein (166 aa).

The protein belongs to the SmpB family.

It is found in the cytoplasm. In terms of biological role, required for rescue of stalled ribosomes mediated by trans-translation. Binds to transfer-messenger RNA (tmRNA), required for stable association of tmRNA with ribosomes. tmRNA and SmpB together mimic tRNA shape, replacing the anticodon stem-loop with SmpB. tmRNA is encoded by the ssrA gene; the 2 termini fold to resemble tRNA(Ala) and it encodes a 'tag peptide', a short internal open reading frame. During trans-translation Ala-aminoacylated tmRNA acts like a tRNA, entering the A-site of stalled ribosomes, displacing the stalled mRNA. The ribosome then switches to translate the ORF on the tmRNA; the nascent peptide is terminated with the 'tag peptide' encoded by the tmRNA and targeted for degradation. The ribosome is freed to recommence translation, which seems to be the essential function of trans-translation. In Parasynechococcus marenigrum (strain WH8102), this protein is SsrA-binding protein.